The following is a 608-amino-acid chain: Nuclear receptor subfamily 2 group C member 1 (608 aa).

The tract at residues methionine 1–methionine 179 is required for interaction with KAT2B. A DNA-binding region (nuclear receptor) is located at residues phenylalanine 111–cysteine 186. NR C4-type zinc fingers lie at residues cysteine 114–cysteine 134 and cysteine 150–cysteine 169. Residues serine 198 and serine 216 each carry the phosphoserine modification. At threonine 221 the chain carries Phosphothreonine. Threonine 223 carries the post-translational modification Phosphothreonine; by MAPK1. A Glycyl lysine isopeptide (Lys-Gly) (interchain with G-Cter in SUMO); alternate cross-link involves residue lysine 251. Lysine 251 is covalently cross-linked (Glycyl lysine isopeptide (Lys-Gly) (interchain with G-Cter in SUMO2); alternate). One can recognise an NR LBD domain in the interval glycine 353–glutamate 595. The residue at position 586 (serine 586) is a Phosphoserine; by PKC. The tract at residues proline 589–isoleucine 608 is required for interaction with NRIP1. Lysine 593 is covalently cross-linked (Glycyl lysine isopeptide (Lys-Gly) (interchain with G-Cter in SUMO2)).

Belongs to the nuclear hormone receptor family. NR2 subfamily. In terms of assembly, homodimer. Heterodimer; with NR2C2 which is required for chromatin remodeling and for binding to promoter regions such as globin DR1 repeats. Interacts with ESR1; the interaction prevents homodimerization of ESR1 and suppresses its transcriptional activity and cell growth. Interacts with NRIP1 (via its LXXLL motifs); the interaction provides corepressor activity. Interacts with HDAC3 (via the DNA-binding domain); the interaction recruits phosphorylated NR2C1 to PML bodies for sumoylation. Interacts with HDAC4 (via the DNA-binding domain). Interacts with PIAS1; the interaction is required for sumoylation of NR2C1. Interacts with UBE2I; the interaction is required for sumoylation of NR2C1. Interacts with KAT2B; the interaction acts as a corepressor of gene expression. Post-translationally, sumoylation requires both PIAS1 and UBE2I. Sumoylation appears to dissociate NR2C1 from the PML nuclear bodies. Enhances the interaction with NRIP1 but inhibits interaction with KAT2B. In proliferating cells, stimulation by all-trans retinoic acid, activation of MAPK1-mediated phosphorylation and recruitment to PML bodies with subsequent sumoylation, suppresses OCT4 expression. In terms of processing, phosphorylated on several serine and threonine residues. Phosphorylation on Thr-223, stimulated by all-trans retinoic acid (atRA) mediates PML location and sumoylation in proliferating cells which then modulates its association with effector molecules, KAT2B and NRIP1. Phosphorylation on Ser-586 by PKC is important for protein stability and function as activator of RARB.

It localises to the nucleus. It is found in the PML body. Orphan nuclear receptor. Binds the IR7 element in the promoter of its own gene in an autoregulatory negative feedback mechanism. Primarily repressor of a broad range of genes including ESR1 and RARB. Together with NR2C2, forms the core of the DRED (direct repeat erythroid-definitive) complex that represses embryonic and fetal globin transcription. Binds to hormone response elements (HREs) consisting of two 5'-AGGTCA-3' half site direct repeat consensus sequences. Also activator of OCT4 gene expression. Plays a fundamental role in early embryogenesis and regulates embryonic stem cell proliferation and differentiation. Mediator of retinoic acid-regulated preadipocyte proliferation. This Bos taurus (Bovine) protein is Nuclear receptor subfamily 2 group C member 1 (NR2C1).